The chain runs to 235 residues: Tetraspanin-8 (235 aa).

Residues 1-12 (MAGVSSCLKYSM) are Cytoplasmic-facing. Residues 13–33 (FFFNFLFWVCGTLILGLAIWV) traverse the membrane as a helical segment. Topologically, residues 34–52 (RVSKDGKEIITSGDSSTNP) are extracellular. The chain crosses the membrane as a helical span at residues 53–73 (FIAVNILIAVGSIIMVLGFLG). Topologically, residues 74-84 (CCGAVKESRCM) are cytoplasmic. Residues 85 to 105 (LLLFFIGLLLILILQVAAGIL) form a helical membrane-spanning segment. Over 106 to 203 (GAAFKPEYNR…SLIKDLFEKN (98 aa)) the chain is Extracellular. Asn-118 carries an N-linked (GlcNAc...) asparagine glycan. A helical membrane pass occupies residues 204–224 (IIIVIGIAFGLAVIEILGLVF). Residues 225–235 (SMVLYCQIGSK) lie on the Cytoplasmic side of the membrane.

Belongs to the tetraspanin (TM4SF) family. As to quaternary structure, forms homooligomers. Interacts with MEP1B. Interacts with integrin alpha3/ITGA3. Interacts with RICTOR and MTOR. Interacts with ADAM17. Interacts with ECE1.

It localises to the cell membrane. Its function is as follows. Structural component of specialized membrane microdomains known as tetraspanin-enriched microdomains (TERMs), which act as platforms for receptor clustering and signaling. Participates thereby in diverse biological functions such as cell signal transduction, migration and protein trafficking. Promotes ADAM17-mediated TNF-alpha processing through recruitment of ADAM17 to tetraspanin-enriched micro-domains (TEMs). Forms a complex with RICTOR and integrin alpha3/ITGA3 to mediate mTORC2 activation and AKT1 phosphorylation leading to cell migration. Reduces apoptosis and autophagy induced by high glucose levels through forming a complex with mTOR and RICTOR. Contributes to the maintenance of intestinal epithelial barrier and plays a role in the regulation of intestine inflammation by switching interferon gamma receptor 1/IFNGR1 from clathrin-dependent to lipid raft-dependent endocytosis route to limit STAT1 activation magnitude and duration. Acts as a modulator of the endothelin axis by associating with endothelin converting enzyme ECE1 and regulating its activity of conversion of the endothelin-1 precursor to endothelin. In Mus musculus (Mouse), this protein is Tetraspanin-8 (Tspan8).